The chain runs to 31 residues: Sarcolipin (31 aa).

Topologically, residues 1–7 (MERSTQE) are cytoplasmic. A helical membrane pass occupies residues 8–26 (LFINFTVVLITVLLMWLLV). Over 27 to 31 (RSYQY) the chain is Lumenal.

It belongs to the sarcolipin family. In terms of assembly, homooligomer. Can also form heterooligomers with other sarcoplasmic/endoplasmic reticulum calcium ATPase (SERCA) regulators ARLN, ERLN, PLN and STRIT1/DWORF. Monomer. Interacts with calcium ATPase ATP2A1/SERCA1. Interacts as a monomer with ATP2A2/SERCA2; the interaction decreases ATP2A2 Ca(2+) affinity. Interacts with VMP1; VMP1 competes with PLN and SLN to prevent them from forming an inhibitory complex with ATP2A2.

It is found in the sarcoplasmic reticulum membrane. The protein localises to the endoplasmic reticulum membrane. Functionally, reversibly inhibits the activity of ATP2A1/SERCA1 and ATP2A2/SERCA2 in sarcoplasmic reticulum by decreasing the apparent affinity of the ATPase for Ca(2+). Also inhibits the activity of ATP2A3/SERCA3. Modulates calcium re-uptake during muscle relaxation and plays an important role in calcium homeostasis in muscle. Required for muscle-based, non-shivering thermogenesis. This is Sarcolipin (Sln) from Rattus norvegicus (Rat).